The chain runs to 259 residues: MIQIDALPAFSDNYIWLLQDTAKRRCAVVDPGDAAPVEAWLAANPDWVLEDILVTHHHNDHVGGVERLKKLTGARVSGPANERIPCRDLALDEGDEVTAVGVTFQVLAVPGHTLGHIAFFSDQPATPVLFSGDTLFAAGCGRMFEGTPEQMQPALARLASLPERTEVYCAHEYTLSNLRFAKAVEPQNPHVLQRFDDVTRLRADNRITLPSTIGLERLTNPFLRTSATLVKQKADEWKGHSNTTHVAVFAALRSWKDTF.

Residues His-56, His-58, Asp-60, His-61, His-112, Asp-133, and His-171 each contribute to the Zn(2+) site.

This sequence belongs to the metallo-beta-lactamase superfamily. Glyoxalase II family. Monomer. Requires Zn(2+) as cofactor.

It carries out the reaction an S-(2-hydroxyacyl)glutathione + H2O = a 2-hydroxy carboxylate + glutathione + H(+). The protein operates within secondary metabolite metabolism; methylglyoxal degradation; (R)-lactate from methylglyoxal: step 2/2. Functionally, thiolesterase that catalyzes the hydrolysis of S-D-lactoyl-glutathione to form glutathione and D-lactic acid. The sequence is that of Hydroxyacylglutathione hydrolase from Pseudomonas putida (strain W619).